The following is a 432-amino-acid chain: Adenylosuccinate synthetase (432 aa).

GTP is bound by residues 12–18 (GDEGKGK) and 40–42 (GHT). Residue aspartate 13 is the Proton acceptor of the active site. The Mg(2+) site is built by aspartate 13 and glycine 40. IMP contacts are provided by residues 13–16 (DEGK), 38–41 (NAGH), threonine 132, arginine 146, glutamine 226, threonine 241, and arginine 305. Histidine 41 acts as the Proton donor in catalysis. Residue 301-307 (TVTGRKR) participates in substrate binding. Residues arginine 307, 333-335 (KLD), and 415-417 (STS) contribute to the GTP site.

The protein belongs to the adenylosuccinate synthetase family. As to quaternary structure, homodimer. It depends on Mg(2+) as a cofactor.

The protein localises to the cytoplasm. It catalyses the reaction IMP + L-aspartate + GTP = N(6)-(1,2-dicarboxyethyl)-AMP + GDP + phosphate + 2 H(+). It participates in purine metabolism; AMP biosynthesis via de novo pathway; AMP from IMP: step 1/2. Functionally, plays an important role in the de novo pathway of purine nucleotide biosynthesis. Catalyzes the first committed step in the biosynthesis of AMP from IMP. The polypeptide is Adenylosuccinate synthetase (Rhizobium etli (strain ATCC 51251 / DSM 11541 / JCM 21823 / NBRC 15573 / CFN 42)).